We begin with the raw amino-acid sequence, 236 residues long: Small ribosomal subunit protein eS6 (236 aa).

Phosphoserine occurs at positions 232 and 233.

The protein belongs to the eukaryotic ribosomal protein eS6 family. Post-translationally, phosphorylated.

The protein is Small ribosomal subunit protein eS6 (RPS6) of Kluyveromyces lactis (strain ATCC 8585 / CBS 2359 / DSM 70799 / NBRC 1267 / NRRL Y-1140 / WM37) (Yeast).